Consider the following 323-residue polypeptide: Aldo-keto reductase family 1 member C4 (323 aa).

Residues glycine 20–tyrosine 24 and aspartate 50 each bind NADP(+). Tyrosine 55 (proton donor) is an active-site residue. Histidine 117 lines the substrate pocket. NADP(+) contacts are provided by residues serine 166 to asparagine 167, glutamine 190, histidine 216 to threonine 221, and lysine 270 to asparagine 280.

Belongs to the aldo/keto reductase family. In terms of assembly, monomer. High expression in liver. Also expressed in kidney.

The protein localises to the cytoplasm. It is found in the cytosol. The enzyme catalyses chlordecone alcohol + NADP(+) = chlordecone + NADPH + H(+). It catalyses the reaction a 3alpha-hydroxysteroid + NADP(+) = a 3-oxosteroid + NADPH + H(+). It carries out the reaction a 3alpha-hydroxysteroid + NAD(+) = a 3-oxosteroid + NADH + H(+). The catalysed reaction is 5alpha-androstane-3alpha,17beta-diol + NADP(+) = 17beta-hydroxy-5alpha-androstan-3-one + NADPH + H(+). The enzyme catalyses 5alpha-androstane-3beta,17beta-diol + NADP(+) = 17beta-hydroxy-5alpha-androstan-3-one + NADPH + H(+). It catalyses the reaction 5alpha-androstane-3alpha,17beta-diol + NAD(+) = 17beta-hydroxy-5alpha-androstan-3-one + NADH + H(+). It carries out the reaction 17beta-estradiol + NADP(+) = estrone + NADPH + H(+). The catalysed reaction is 17beta-estradiol + NAD(+) = estrone + NADH + H(+). The enzyme catalyses (20S)-hydroxypregn-4-en-3-one + NADP(+) = progesterone + NADPH + H(+). It catalyses the reaction (20S)-hydroxypregn-4-en-3-one + NAD(+) = progesterone + NADH + H(+). It carries out the reaction androsterone + NADP(+) = 5alpha-androstan-3,17-dione + NADPH + H(+). The catalysed reaction is testosterone + NADP(+) = androst-4-ene-3,17-dione + NADPH + H(+). The enzyme catalyses testosterone + NAD(+) = androst-4-ene-3,17-dione + NADH + H(+). It catalyses the reaction 3alpha-hydroxy-5alpha-androstane 17-O-(beta-D-glucuronate) + NADP(+) = 5alpha-dihydrotestosterone 17-O-(beta-D-glucuronate) + NADPH + H(+). It carries out the reaction (3beta,5alpha,17beta)-3-hydroxy-androstan-17-yl sulfate + NADP(+) = 5alpha-dihydrotestosterone sulfate + NADPH + H(+). The catalysed reaction is 5alpha-androstane-3alpha,17beta-diol + NAD(+) = androsterone + NADH + H(+). It participates in steroid metabolism. Its activity is regulated as follows. Potently inhibited by benzbromarone, 3',3'',5',5''-tetrabromophenolphthalein (TBPP) and o-cresolphthalein. In terms of biological role, cytosolic aldo-keto reductase that catalyzes the NADH and NADPH-dependent reduction of ketosteroids to hydroxysteroids. Liver specific enzyme that acts as an NAD(P)(H)-dependent 3-, 17- and 20-ketosteroid reductase on the steroid nucleus and side chain. Displays the ability to catalyze both oxidation and reduction in vitro, but most probably acts as a reductase in vivo since the oxidase activity measured in vitro is inhibited by physiological concentration of NADPH. Acts preferentially as a 3-alpha-hydroxysteroid dehydrogenase (HSD) with a subsidiary 3-beta-HSD activity. Catalyzes efficiently the transformation of the potent androgen 5-alpha-dihydrotestosterone (5alpha-DHT or 17beta-hydroxy-5alpha-androstan-3-one) into the less active form, 5-alpha-androstan-3-alpha,17-beta-diol (3-alpha-diol). Catalyzes the reduction of estrone into 17beta-estradiol but with low efficiency. Metabolizes a broad spectrum of natural and synthetic therapeutic steroid and plays an important role in metabolism of androgens, estrogens, progestereone and conjugated steroids. Catalyzes the biotransformation of the pesticide chlordecone (kepone) to its corresponding alcohol leading to increased biliary excretion of the pesticide and concomitant reduction of its neurotoxicity since bile is the major excretory route. The polypeptide is Aldo-keto reductase family 1 member C4 (AKR1C4) (Macaca fuscata fuscata (Japanese macaque)).